The chain runs to 363 residues: UDP-N-acetylglucosamine--N-acetylmuramyl-(pentapeptide) pyrophosphoryl-undecaprenol N-acetylglucosamine transferase (363 aa).

UDP-N-acetyl-alpha-D-glucosamine contacts are provided by residues 21 to 23, asparagine 129, arginine 170, serine 196, and glutamine 290; that span reads TGG.

This sequence belongs to the glycosyltransferase 28 family. MurG subfamily.

It is found in the cell inner membrane. The catalysed reaction is di-trans,octa-cis-undecaprenyl diphospho-N-acetyl-alpha-D-muramoyl-L-alanyl-D-glutamyl-meso-2,6-diaminopimeloyl-D-alanyl-D-alanine + UDP-N-acetyl-alpha-D-glucosamine = di-trans,octa-cis-undecaprenyl diphospho-[N-acetyl-alpha-D-glucosaminyl-(1-&gt;4)]-N-acetyl-alpha-D-muramoyl-L-alanyl-D-glutamyl-meso-2,6-diaminopimeloyl-D-alanyl-D-alanine + UDP + H(+). It functions in the pathway cell wall biogenesis; peptidoglycan biosynthesis. In terms of biological role, cell wall formation. Catalyzes the transfer of a GlcNAc subunit on undecaprenyl-pyrophosphoryl-MurNAc-pentapeptide (lipid intermediate I) to form undecaprenyl-pyrophosphoryl-MurNAc-(pentapeptide)GlcNAc (lipid intermediate II). The protein is UDP-N-acetylglucosamine--N-acetylmuramyl-(pentapeptide) pyrophosphoryl-undecaprenol N-acetylglucosamine transferase of Synechococcus sp. (strain ATCC 27144 / PCC 6301 / SAUG 1402/1) (Anacystis nidulans).